The sequence spans 291 residues: Undecaprenyl-diphosphatase (291 aa).

Helical transmembrane passes span Met1–Phe21, Ser48–Phe68, Leu102–Ile122, Leu126–Ala146, Ile162–Phe182, Ser203–Leu223, Phe236–Leu256, and Phe267–Ile287.

This sequence belongs to the UppP family.

Its subcellular location is the cell membrane. It carries out the reaction di-trans,octa-cis-undecaprenyl diphosphate + H2O = di-trans,octa-cis-undecaprenyl phosphate + phosphate + H(+). Catalyzes the dephosphorylation of undecaprenyl diphosphate (UPP). Confers resistance to bacitracin. The polypeptide is Undecaprenyl-diphosphatase (Staphylococcus aureus (strain MSSA476)).